The following is a 521-amino-acid chain: Biotinidase (521 aa).

The signal sequence occupies residues 1–25; that stretch reads MSGARTAHALVFLLGCSALALGVCS. The CN hydrolase domain occupies 50-329; that stretch reads NPLELSSRQQ…QGLVGTENTT (280 aa). Glu-90 acts as the Proton acceptor in catalysis. Asn-128 and Asn-181 each carry an N-linked (GlcNAc...) asparagine glycan. The Proton donor role is filled by Lys-190. Cys-223 (nucleophile) is an active-site residue. N-linked (GlcNAc...) asparagine glycosylation occurs at Asn-380.

This sequence belongs to the carbon-nitrogen hydrolase superfamily. BTD/VNN family.

It localises to the secreted. The protein resides in the extracellular space. It carries out the reaction biocytin + H2O = biotin + L-lysine. It catalyses the reaction biotin amide + H2O = biotin + NH4(+). In terms of biological role, catalytic release of biotin from biocytin, the product of biotin-dependent carboxylases degradation. This Rattus norvegicus (Rat) protein is Biotinidase.